Here is a 396-residue protein sequence, read N- to C-terminus: Lipid-A-disaccharide synthase (396 aa).

This sequence belongs to the LpxB family.

The enzyme catalyses a lipid X + a UDP-2-N,3-O-bis[(3R)-3-hydroxyacyl]-alpha-D-glucosamine = a lipid A disaccharide + UDP + H(+). Its pathway is bacterial outer membrane biogenesis; LPS lipid A biosynthesis. In terms of biological role, condensation of UDP-2,3-diacylglucosamine and 2,3-diacylglucosamine-1-phosphate to form lipid A disaccharide, a precursor of lipid A, a phosphorylated glycolipid that anchors the lipopolysaccharide to the outer membrane of the cell. This is Lipid-A-disaccharide synthase from Nitrobacter hamburgensis (strain DSM 10229 / NCIMB 13809 / X14).